A 333-amino-acid polypeptide reads, in one-letter code: Homeobox protein Nkx-3.2 (333 aa).

Disordered stretches follow at residues 74–121 (PART…RARV) and 137–212 (DLEE…SRAA). Residues 137–148 (DLEEEAPVRSDS) show a composition bias toward basic and acidic residues. The span at 179 to 191 (GAAGSGASGGQAG) shows a compositional bias: gly residues. Residues 206–265 (KKRSRAAFSHAQVFELERRFNHQRYLSGPERADLAASLKLTETQVKIWFQNRRYKTKRRQ) constitute a DNA-binding region (homeobox).

It belongs to the NK-3 homeobox family. Expressed widely in mesoderm at the gastroduodenal junction (at protein level). Expressed in visceral mesoderm and embryonic skeleton. Expression is restricted to immature proliferative chondrocytes during endochondral ossification.

Its subcellular location is the nucleus. In terms of biological role, transcriptional repressor that acts as a negative regulator of chondrocyte maturation. PLays a role in distal stomach development; required for proper antral-pyloric morphogenesis and development of antral-type epithelium. In concert with GSC, defines the structural components of the middle ear; required for tympanic ring and gonium development and in the regulation of the width of the malleus. In Mus musculus (Mouse), this protein is Homeobox protein Nkx-3.2 (Nkx3-2).